We begin with the raw amino-acid sequence, 936 residues long: Lon protease homolog, mitochondrial (936 aa).

The transit peptide at 1-40 (MYATRAIARRLERHAARCKGAHVARAVRGARARTTSAPRA) directs the protein to the mitochondrion. Positions 65–95 (AFVSSVDGDGSTGSTGSSSSSSSSAFGDSAS) are disordered. Residues 66-95 (FVSSVDGDGSTGSTGSSSSSSSSAFGDSAS) show a composition bias toward low complexity. The Lon N-terminal domain occupies 112-352 (VLAVPLPRRP…ATLELLKKEV (241 aa)). 507 to 514 (GPPGVGKT) provides a ligand contact to ATP. Residues 748–932 (VTPPGVVTGL…DEVYRQALDW (185 aa)) form the Lon proteolytic domain. Active-site residues include S838 and K881.

Belongs to the peptidase S16 family. In terms of assembly, homohexamer or homoheptamer. Organized in a ring with a central cavity.

The protein localises to the mitochondrion matrix. The catalysed reaction is Hydrolysis of proteins in presence of ATP.. ATP-dependent serine protease that mediates the selective degradation of misfolded, unassembled or oxidatively damaged polypeptides as well as certain short-lived regulatory proteins in the mitochondrial matrix. May also have a chaperone function in the assembly of inner membrane protein complexes. Participates in the regulation of mitochondrial gene expression and in the maintenance of the integrity of the mitochondrial genome. Binds to mitochondrial DNA in a site-specific manner. The protein is Lon protease homolog, mitochondrial of Ostreococcus lucimarinus (strain CCE9901).